Here is a 41-residue protein sequence, read N- to C-terminus: Large ribosomal subunit protein bL36 (41 aa).

It belongs to the bacterial ribosomal protein bL36 family.

This Methylorubrum extorquens (strain CM4 / NCIMB 13688) (Methylobacterium extorquens) protein is Large ribosomal subunit protein bL36.